The sequence spans 451 residues: Tubulin alpha chain (451 aa).

Q11 serves as a coordination point for GTP. At K40 the chain carries N6-acetyllysine. The GTP site is built by E71, G144, T145, T179, N206, and N228. Mg(2+) is bound at residue E71. Residue E254 is part of the active site.

It belongs to the tubulin family. In terms of assembly, dimer of alpha and beta chains. A typical microtubule is a hollow water-filled tube with an outer diameter of 25 nm and an inner diameter of 15 nM. Alpha-beta heterodimers associate head-to-tail to form protofilaments running lengthwise along the microtubule wall with the beta-tubulin subunit facing the microtubule plus end conferring a structural polarity. Microtubules usually have 13 protofilaments but different protofilament numbers can be found in some organisms and specialized cells. Mg(2+) is required as a cofactor. In terms of processing, undergoes a tyrosination/detyrosination cycle, the cyclic removal and re-addition of a C-terminal tyrosine residue by the enzymes tubulin tyrosine carboxypeptidase (TTCP) and tubulin tyrosine ligase (TTL), respectively. Post-translationally, acetylation of alpha chains at Lys-40 stabilizes microtubules and affects affinity and processivity of microtubule motors. This modification has a role in multiple cellular functions, ranging from cell motility, cell cycle progression or cell differentiation to intracellular trafficking and signaling.

It is found in the cytoplasm. It localises to the cytoskeleton. It catalyses the reaction GTP + H2O = GDP + phosphate + H(+). Tubulin is the major constituent of microtubules, a cylinder consisting of laterally associated linear protofilaments composed of alpha- and beta-tubulin heterodimers. Microtubules grow by the addition of GTP-tubulin dimers to the microtubule end, where a stabilizing cap forms. Below the cap, tubulin dimers are in GDP-bound state, owing to GTPase activity of alpha-tubulin. The chain is Tubulin alpha chain (TUBA) from Chlorella vulgaris (Green alga).